A 63-amino-acid polypeptide reads, in one-letter code: Large ribosomal subunit protein uL29 (63 aa).

The protein belongs to the universal ribosomal protein uL29 family.

The chain is Large ribosomal subunit protein uL29 from Shewanella oneidensis (strain ATCC 700550 / JCM 31522 / CIP 106686 / LMG 19005 / NCIMB 14063 / MR-1).